Consider the following 153-residue polypeptide: MKKNLEATIEEIVTKITDEHGFEMVDVEYVKEAGEYYLRVYIDKEEGISLNECELVSRELSPILDEKDPIKENYFLEVSSPGLDRALKKDRDFVRYQGRDVDLKLYKPLNGCKQFEGELVGLTEDNNIKIIANGKEMEFNRKDVAIVRLAIKF.

This sequence belongs to the RimP family.

The protein resides in the cytoplasm. Its function is as follows. Required for maturation of 30S ribosomal subunits. This chain is Ribosome maturation factor RimP, found in Clostridioides difficile (strain 630) (Peptoclostridium difficile).